Reading from the N-terminus, the 293-residue chain is Homoserine kinase (293 aa).

84–94 is an ATP binding site; that stretch reads PISRGLGSSSA.

This sequence belongs to the GHMP kinase family. Homoserine kinase subfamily.

The protein resides in the cytoplasm. The enzyme catalyses L-homoserine + ATP = O-phospho-L-homoserine + ADP + H(+). Its pathway is amino-acid biosynthesis; L-threonine biosynthesis; L-threonine from L-aspartate: step 4/5. Its function is as follows. Catalyzes the ATP-dependent phosphorylation of L-homoserine to L-homoserine phosphate. The polypeptide is Homoserine kinase (Wolinella succinogenes (strain ATCC 29543 / DSM 1740 / CCUG 13145 / JCM 31913 / LMG 7466 / NCTC 11488 / FDC 602W) (Vibrio succinogenes)).